The chain runs to 37 residues: Cytochrome b6-f complex subunit 5 (37 aa).

The helical transmembrane segment at 5-25 (LLSGIVLGLIPITLAGLFVTA) threads the bilayer.

Belongs to the PetG family. In terms of assembly, the 4 large subunits of the cytochrome b6-f complex are cytochrome b6, subunit IV (17 kDa polypeptide, PetD), cytochrome f and the Rieske protein, while the 4 small subunits are PetG, PetL, PetM and PetN. The complex functions as a dimer.

It localises to the plastid. It is found in the chloroplast thylakoid membrane. Its function is as follows. Component of the cytochrome b6-f complex, which mediates electron transfer between photosystem II (PSII) and photosystem I (PSI), cyclic electron flow around PSI, and state transitions. PetG is required for either the stability or assembly of the cytochrome b6-f complex. The protein is Cytochrome b6-f complex subunit 5 of Chaetosphaeridium globosum (Charophycean green alga).